The following is a 358-amino-acid chain: Methylthioribose-1-phosphate isomerase (358 aa).

Substrate-binding positions include 54–56 (RGA), arginine 96, and glutamine 205. Catalysis depends on aspartate 246, which acts as the Proton donor. Residue 256–257 (NK) participates in substrate binding.

The protein belongs to the eIF-2B alpha/beta/delta subunits family. MtnA subfamily.

It carries out the reaction 5-(methylsulfanyl)-alpha-D-ribose 1-phosphate = 5-(methylsulfanyl)-D-ribulose 1-phosphate. It participates in amino-acid biosynthesis; L-methionine biosynthesis via salvage pathway; L-methionine from S-methyl-5-thio-alpha-D-ribose 1-phosphate: step 1/6. Catalyzes the interconversion of methylthioribose-1-phosphate (MTR-1-P) into methylthioribulose-1-phosphate (MTRu-1-P). This chain is Methylthioribose-1-phosphate isomerase, found in Pseudomonas aeruginosa (strain UCBPP-PA14).